Consider the following 227-residue polypeptide: DNA repair protein RecO (227 aa).

This sequence belongs to the RecO family.

Functionally, involved in DNA repair and RecF pathway recombination. The chain is DNA repair protein RecO from Pseudomonas putida (strain GB-1).